A 704-amino-acid polypeptide reads, in one-letter code: Ion-translocating oxidoreductase complex subunit C (704 aa).

4Fe-4S ferredoxin-type domains are found at residues 368 to 397 (MGAP…QQLY) and 407 to 436 (KATA…VQYF). Cys-377, Cys-380, Cys-383, Cys-387, Cys-416, Cys-419, Cys-422, and Cys-426 together coordinate [4Fe-4S] cluster. Positions 535–684 (ARAKQAAHPM…PADPRKAAVA (150 aa)) are disordered. Positions 556–565 (KAAVEAAIAR) are enriched in low complexity.

It belongs to the 4Fe4S bacterial-type ferredoxin family. RnfC subfamily. The complex is composed of six subunits: RsxA, RsxB, RsxC, RsxD, RsxE and RsxG. The cofactor is [4Fe-4S] cluster.

Its subcellular location is the cell inner membrane. Its function is as follows. Part of a membrane-bound complex that couples electron transfer with translocation of ions across the membrane. Required to maintain the reduced state of SoxR. This is Ion-translocating oxidoreductase complex subunit C from Salmonella paratyphi C (strain RKS4594).